The primary structure comprises 540 residues: CUB domain-containing protein 2 (540 aa).

The first 22 residues, 1-22, serve as a signal peptide directing secretion; sequence MLAEWGACLLLAVALLGPGLQA. The Extracellular portion of the chain corresponds to 23 to 516; sequence QAMEGVKCGG…VSMVAQDTSD (494 aa). 6 disulfide bridges follow: cysteine 30–cysteine 56, cysteine 83–cysteine 106, cysteine 145–cysteine 171, cysteine 198–cysteine 218, cysteine 257–cysteine 283, and cysteine 314–cysteine 336. CUB domains are found at residues 30 to 143, 145 to 255, and 257 to 373; these read CGGV…YQKD, CGGV…YFSG, and CQEV…YIGV. Asparagine 40 carries an N-linked (GlcNAc...) asparagine glycan. Asparagine 267 carries an N-linked (GlcNAc...) asparagine glycan. 3 N-linked (GlcNAc...) asparagine glycosylation sites follow: asparagine 377, asparagine 435, and asparagine 436. Residues 517–537 traverse the membrane as a helical segment; it reads IVFLGLCILAGILMVIAIVVL. The Cytoplasmic portion of the chain corresponds to 538 to 540; that stretch reads MLL.

The protein localises to the membrane. This chain is CUB domain-containing protein 2 (CDCP2), found in Homo sapiens (Human).